Here is a 328-residue protein sequence, read N- to C-terminus: Formimidoylglutamase (328 aa).

6 residues coordinate Mn(2+): histidine 133, aspartate 159, histidine 161, aspartate 163, aspartate 253, and aspartate 255.

Belongs to the arginase family. Mn(2+) serves as cofactor.

The enzyme catalyses N-formimidoyl-L-glutamate + H2O = formamide + L-glutamate. It participates in amino-acid degradation; L-histidine degradation into L-glutamate; L-glutamate from N-formimidoyl-L-glutamate (hydrolase route): step 1/1. Its function is as follows. Catalyzes the conversion of N-formimidoyl-L-glutamate to L-glutamate and formamide. The polypeptide is Formimidoylglutamase (Streptococcus pyogenes serotype M5 (strain Manfredo)).